Reading from the N-terminus, the 152-residue chain is Large ribosomal subunit protein bL9 (152 aa).

It belongs to the bacterial ribosomal protein bL9 family.

In terms of biological role, binds to the 23S rRNA. This Corynebacterium urealyticum (strain ATCC 43042 / DSM 7109) protein is Large ribosomal subunit protein bL9.